The primary structure comprises 1317 residues: Putative late blight resistance protein homolog R1B-14 (1317 aa).

Coiled-coil stretches lie at residues 419–442 (RYSDSLAFLKNQLQVIQTEFESLQ) and 535–556 (RMNEEIVGFKDVIENLRNRLLN). One can recognise an NB-ARC domain in the interval 521-823 (TVITHTSSQL…SESFIKSSEG (303 aa)). 568-575 (GMPGLGKT) contacts ATP. 6 LRR repeats span residues 944–968 (FKFLKVLDLEHQVVIDFIPTELFYL), 987–1015 (LWNLETLILKSTPVGRHNTLLLPSTIWDM), 1090–1114 (PIRLEILKLYRSKAFKTIPFCISAP), 1138–1161 (LKHLEVLKLCDLEFGDHREWKVSN), 1164–1186 (FPQLKILKLEYLSLMKWIVADDA), and 1187–1211 (FPNLEQLVLHGCQDLMEIPSCFMDI). Residues 1251-1317 (IKKMVLKFDI…VSKLRKRGML (67 aa)) enclose the HMA domain.

The protein belongs to the disease resistance NB-LRR family.

It localises to the cytoplasm. The protein resides in the membrane. Functionally, confers resistance to late blight (Phytophthora infestans) races carrying the avirulence gene Avr1. Resistance proteins guard the plant against pathogens that contain an appropriate avirulence protein via an indirect interaction with this avirulence protein. That triggers a defense system including the hypersensitive response, which restricts the pathogen growth. This Solanum demissum (Wild potato) protein is Putative late blight resistance protein homolog R1B-14 (R1B-14).